The primary structure comprises 372 residues: GDP-mannose 4,6-dehydratase (372 aa).

NADP(+) contacts are provided by residues 9 to 14 (GVTGQD), 64 to 65 (DL), 86 to 90 (LGAQS), and Tyr-101. Thr-133 is an active-site residue. Active-site nucleophile residues include Glu-135 and Tyr-157. NADP(+) contacts are provided by Lys-161, His-187, and Arg-192.

Belongs to the NAD(P)-dependent epimerase/dehydratase family. GDP-mannose 4,6-dehydratase subfamily. It depends on NADP(+) as a cofactor.

The catalysed reaction is GDP-alpha-D-mannose = GDP-4-dehydro-alpha-D-rhamnose + H2O. Its pathway is nucleotide-sugar biosynthesis; GDP-L-fucose biosynthesis via de novo pathway; GDP-L-fucose from GDP-alpha-D-mannose: step 1/2. Its function is as follows. Catalyzes the conversion of GDP-D-mannose to GDP-4-dehydro-6-deoxy-D-mannose. The chain is GDP-mannose 4,6-dehydratase from Vibrio cholerae.